The primary structure comprises 67 residues: Ferredoxin FdxE (67 aa).

The [3Fe-4S] cluster site is built by C10, V11, Q15, C16, and C54.

Interacts with the cytochrome P450 143 with high affinity (Kd=84 nM). [3Fe-4S] cluster is required as a cofactor.

In terms of biological role, ferredoxin that is the redox partner of cytochrome CYP143, a cytochrome P450 encoded by an adjacent gene. This is Ferredoxin FdxE from Mycobacterium tuberculosis (strain ATCC 25618 / H37Rv).